We begin with the raw amino-acid sequence, 128 residues long: RYamide neuropeptides (128 aa).

The N-terminal stretch at 1 to 23 is a signal peptide; the sequence is MHARKLIVVLVYILTVLVSVAVS. The propeptide occupies 26–29; sequence YTSE. Tyr-44 bears the Tyrosine amide mark. Residues 47–63 constitute a propeptide that is removed on maturation; that stretch reads GGPSPNNKENKVNIRPR. Residue Tyr-73 is modified to Tyrosine amide. The propeptide occupies 77-128; sequence SGWSPNASLVYPVSTPLCGLDEDLSCAYTGISDLYRCTPRKGESEEFTTSSN.

It is found in the secreted. Functionally, neuropeptides RYamide-1 and RYamide-2 are ligands for the G-protein coupled receptor RYa-R. RYamide-2 is the most potent activator of RYa-R. This is RYamide neuropeptides from Tribolium castaneum (Red flour beetle).